The primary structure comprises 467 residues: Ribulose bisphosphate carboxylase large chain (467 aa).

Positions 1 to 2 are excised as a propeptide; the sequence is MS. Pro3 carries the N-acetylproline modification. Lys14 carries the post-translational modification N6,N6,N6-trimethyllysine. Residues Asn123 and Thr173 each contribute to the substrate site. Lys175 (proton acceptor) is an active-site residue. Residue Lys177 coordinates substrate. Positions 201, 203, and 204 each coordinate Mg(2+). At Lys201 the chain carries N6-carboxylysine. His294 (proton acceptor) is an active-site residue. Substrate is bound by residues Arg295, His327, and Ser379.

Belongs to the RuBisCO large chain family. Type I subfamily. Heterohexadecamer of 8 large chains and 8 small chains; disulfide-linked. The disulfide link is formed within the large subunit homodimers. The cofactor is Mg(2+). Post-translationally, the disulfide bond which can form in the large chain dimeric partners within the hexadecamer appears to be associated with oxidative stress and protein turnover.

The protein resides in the plastid. The protein localises to the chloroplast. The catalysed reaction is 2 (2R)-3-phosphoglycerate + 2 H(+) = D-ribulose 1,5-bisphosphate + CO2 + H2O. It catalyses the reaction D-ribulose 1,5-bisphosphate + O2 = 2-phosphoglycolate + (2R)-3-phosphoglycerate + 2 H(+). In terms of biological role, ruBisCO catalyzes two reactions: the carboxylation of D-ribulose 1,5-bisphosphate, the primary event in carbon dioxide fixation, as well as the oxidative fragmentation of the pentose substrate in the photorespiration process. Both reactions occur simultaneously and in competition at the same active site. In Serenoa repens (Saw palmetto), this protein is Ribulose bisphosphate carboxylase large chain.